The primary structure comprises 202 residues: Adenosylcobalamin/alpha-ribazole phosphatase (202 aa).

His-8 acts as the Tele-phosphohistidine intermediate in catalysis. Glu-81 serves as the catalytic Proton donor/acceptor.

This sequence belongs to the phosphoglycerate mutase family. In terms of assembly, monomer.

It carries out the reaction adenosylcob(III)alamin 5'-phosphate + H2O = adenosylcob(III)alamin + phosphate. It catalyses the reaction alpha-ribazole 5'-phosphate + H2O = alpha-ribazole + phosphate. It participates in nucleoside biosynthesis; alpha-ribazole biosynthesis; alpha-ribazole from 5,6-dimethylbenzimidazole: step 2/2. In terms of biological role, catalyzes the conversion of adenosylcobalamin 5'-phosphate to adenosylcobalamin (vitamin B12); involved in the assembly of the nucleotide loop of cobalamin. Also catalyzes the hydrolysis of the phospho group from alpha-ribazole 5'-phosphate to form alpha-ribazole. This chain is Adenosylcobalamin/alpha-ribazole phosphatase (cobC), found in Salmonella typhimurium (strain LT2 / SGSC1412 / ATCC 700720).